A 314-amino-acid chain; its full sequence is Dihydroorotate dehydrogenase (fumarate) (314 aa).

Substrate contacts are provided by residues Lys46, 70-74 (NSMGL), and Asn130. A Glycyl lysine isopeptide (Lys-Gly) (interchain with G-Cter in ubiquitin) cross-link involves residue Lys46. An FMN-binding site is contributed by 46-47 (KS). Asn130 serves as a coordination point for FMN. Cys133 functions as the Nucleophile in the catalytic mechanism. Lys167 and Ile195 together coordinate FMN. A substrate-binding site is contributed by 196–197 (NS). Residues Gly224, 252-253 (GG), and 274-275 (GT) each bind FMN.

This sequence belongs to the dihydroorotate dehydrogenase family. Type 1 subfamily. Homodimer. Requires FMN as cofactor.

Its subcellular location is the cytoplasm. It carries out the reaction (S)-dihydroorotate + fumarate = orotate + succinate. It participates in pyrimidine metabolism; UMP biosynthesis via de novo pathway. The activity is independent of the presence of oxygen. Functionally, catalyzes the conversion of dihydroorotate to orotate with fumarate as the electron acceptor. Molecular oxygen can replace fumarate in vitro. Does not use oxaloacetate or NAD or NADP as electron acceptors. This chain is Dihydroorotate dehydrogenase (fumarate) (URA1), found in Saccharomyces cerevisiae (strain ATCC 204508 / S288c) (Baker's yeast).